Reading from the N-terminus, the 211-residue chain is MFRVHCNKCFRHRKTDPAVPFHLTQCRHVICGPCLGQSSLEKNCPLCGQVLKAIQINRDMPTSVANYFADPLRFQQIYRKISKFQADQRASDNLGFYRQLQQLEQNKRQLEGFCKMEAQLNQKVVEEKKRIAELRTYIAYHENAQRMTRRRHSAGERFHTPEFKEAWNTSISTSDKSPSDMPSDSSRRSADLDTQSTRRRSFGSDTKGFRL.

The RING-type zinc finger occupies 6-47; it reads CNKCFRHRKTDPAVPFHLTQCRHVICGPCLGQSSLEKNCPLC. The interval 149-211 is disordered; the sequence is RRRHSAGERF…FGSDTKGFRL (63 aa). Positions 153–165 are enriched in basic and acidic residues; it reads SAGERFHTPEFKE. The segment covering 172–184 has biased composition (low complexity); that stretch reads STSDKSPSDMPSD.

In terms of assembly, may interact with itself, with nenya and vilya through its RING-type zinc finger. As to expression, expressed in nurse cell and pro-oocytes (at protein level).

It localises to the chromosome. In terms of biological role, required for the formation of DNA double-strand breaks (DSBs) together with nenya and vilya during the meiotic recombination process. Plays a role in DSBs processing into crossovers. Plays a redundant role with nenya in chromosome segregation during female meiosis. The sequence is that of RING finger protein narya from Drosophila melanogaster (Fruit fly).